A 342-amino-acid polypeptide reads, in one-letter code: Thioredoxin reductase 2, mitochondrial (342 aa).

The N-terminal 23 residues, 1-23 (MIKHIVSPFRTNFVGISKSVLSR), are a transit peptide targeting the mitochondrion. FAD is bound by residues 34–37 (SGPA), 56–68 (EGMM…AGGQ), 63–64 (IA), glutamine 68, asparagine 77, valine 110, cysteine 168, aspartate 311, 311–320 (DVQDSRYRQA), and 318–320 (RQA). Residues cysteine 165 and cysteine 168 are joined by a disulfide bond.

Belongs to the class-II pyridine nucleotide-disulfide oxidoreductase family. In terms of assembly, homodimer. The cofactor is FAD.

It is found in the mitochondrion. The catalysed reaction is [thioredoxin]-dithiol + NADP(+) = [thioredoxin]-disulfide + NADPH + H(+). Functionally, acts on mitochondrial thioredoxin 3. Implicated in the defense against oxidative stress. This Saccharomyces cerevisiae (strain ATCC 204508 / S288c) (Baker's yeast) protein is Thioredoxin reductase 2, mitochondrial.